The chain runs to 263 residues: 4-hydroxy-tetrahydrodipicolinate reductase (263 aa).

NAD(+)-binding positions include 7 to 12 (GFKGRM), 96 to 98 (GTT), and 122 to 125 (APNF). The active-site Proton donor/acceptor is His-152. His-153 serves as a coordination point for (S)-2,3,4,5-tetrahydrodipicolinate. Lys-156 serves as the catalytic Proton donor. (S)-2,3,4,5-tetrahydrodipicolinate is bound at residue 162-163 (GT).

This sequence belongs to the DapB family.

It is found in the cytoplasm. It catalyses the reaction (S)-2,3,4,5-tetrahydrodipicolinate + NAD(+) + H2O = (2S,4S)-4-hydroxy-2,3,4,5-tetrahydrodipicolinate + NADH + H(+). The catalysed reaction is (S)-2,3,4,5-tetrahydrodipicolinate + NADP(+) + H2O = (2S,4S)-4-hydroxy-2,3,4,5-tetrahydrodipicolinate + NADPH + H(+). The protein operates within amino-acid biosynthesis; L-lysine biosynthesis via DAP pathway; (S)-tetrahydrodipicolinate from L-aspartate: step 4/4. Functionally, catalyzes the conversion of 4-hydroxy-tetrahydrodipicolinate (HTPA) to tetrahydrodipicolinate. The chain is 4-hydroxy-tetrahydrodipicolinate reductase from Listeria monocytogenes serovar 1/2a (strain ATCC BAA-679 / EGD-e).